The chain runs to 168 residues: Peptide deformylase (168 aa).

Residues Cys92 and His134 each contribute to the Fe cation site. The active site involves Glu135. Residue His138 participates in Fe cation binding.

It belongs to the polypeptide deformylase family. It depends on Fe(2+) as a cofactor.

It catalyses the reaction N-terminal N-formyl-L-methionyl-[peptide] + H2O = N-terminal L-methionyl-[peptide] + formate. Its function is as follows. Removes the formyl group from the N-terminal Met of newly synthesized proteins. Requires at least a dipeptide for an efficient rate of reaction. N-terminal L-methionine is a prerequisite for activity but the enzyme has broad specificity at other positions. The chain is Peptide deformylase from Teredinibacter turnerae (strain ATCC 39867 / T7901).